The sequence spans 216 residues: Uracil phosphoribosyltransferase (216 aa).

Residues Arg85, Arg110, and 135-143 contribute to the 5-phospho-alpha-D-ribose 1-diphosphate site; that span reads DPMVATGYS. Residues Ile200 and 205–207 each bind uracil; that span reads GDA. 5-phospho-alpha-D-ribose 1-diphosphate is bound at residue Asp206.

This sequence belongs to the UPRTase family. Mg(2+) is required as a cofactor.

It carries out the reaction UMP + diphosphate = 5-phospho-alpha-D-ribose 1-diphosphate + uracil. Its pathway is pyrimidine metabolism; UMP biosynthesis via salvage pathway; UMP from uracil: step 1/1. Its activity is regulated as follows. Allosterically activated by GTP. Functionally, catalyzes the conversion of uracil and 5-phospho-alpha-D-ribose 1-diphosphate (PRPP) to UMP and diphosphate. The polypeptide is Uracil phosphoribosyltransferase (Burkholderia thailandensis (strain ATCC 700388 / DSM 13276 / CCUG 48851 / CIP 106301 / E264)).